The chain runs to 346 residues: Biotin synthase (346 aa).

One can recognise a Radical SAM core domain in the interval 38–256; that stretch reads RQVQVSTLLS…IAVARIMMPT (219 aa). Positions 53, 57, and 60 each coordinate [4Fe-4S] cluster. Positions 97, 128, 188, and 260 each coordinate [2Fe-2S] cluster.

It belongs to the radical SAM superfamily. Biotin synthase family. Homodimer. [4Fe-4S] cluster is required as a cofactor. Requires [2Fe-2S] cluster as cofactor.

It catalyses the reaction (4R,5S)-dethiobiotin + (sulfur carrier)-SH + 2 reduced [2Fe-2S]-[ferredoxin] + 2 S-adenosyl-L-methionine = (sulfur carrier)-H + biotin + 2 5'-deoxyadenosine + 2 L-methionine + 2 oxidized [2Fe-2S]-[ferredoxin]. It participates in cofactor biosynthesis; biotin biosynthesis; biotin from 7,8-diaminononanoate: step 2/2. Catalyzes the conversion of dethiobiotin (DTB) to biotin by the insertion of a sulfur atom into dethiobiotin via a radical-based mechanism. The chain is Biotin synthase from Shigella boydii serotype 18 (strain CDC 3083-94 / BS512).